A 112-amino-acid polypeptide reads, in one-letter code: UPF0212 protein Mpal_1084 (112 aa).

Belongs to the UPF0212 family.

This is UPF0212 protein Mpal_1084 from Methanosphaerula palustris (strain ATCC BAA-1556 / DSM 19958 / E1-9c).